The chain runs to 1000 residues: Vacuolar sorting protein 39 (1000 aa).

Residues 16 to 282 (PARIDAVESY…RRLVKSNNAV (267 aa)) form the CNH domain. Residues 394–413 (DEASLSRGSSGISDDMESSS) are disordered. The CHCR repeat unit spans residues 607–796 (YSMLVLESCP…YLNPKKSAKD (190 aa)). A disordered region spans residues 844–864 (GLSSSTDSGRSDVDTEEPLEE).

Belongs to the VAM6/VPS39 family. Homooligomer. Component of the homotypic fusion and vacuole protein sorting (HOPS) complex composed of the class C Vps core proteins VPS11, VCL1, VPS18 and VPS33, which in HOPS further associates with VPS39 and VPS41. Interacts directly with VPS11. Binds to RABG3B.

The protein localises to the cytoplasm. It localises to the vacuole membrane. In terms of biological role, essential protein required during embryogenesis. Believed to act in part as a component of the putative HOPS endosomal tethering complex. HOPS is required for the central vacuole formation. May play a role in clustering and fusion of late endosomes and lysosomes. Plays a role in vesicle-mediated protein trafficking to lysosomal compartments including the endocytic membrane transport and autophagic pathways. Required for fusion of endosomes and autophagosomes with lysosomes. The polypeptide is Vacuolar sorting protein 39 (Arabidopsis thaliana (Mouse-ear cress)).